Reading from the N-terminus, the 242-residue chain is Fibrinolytic enzyme, isozyme C (242 aa).

Positions 1-242 (VIGGTNASPG…YLGWIGDNSR (242 aa)) constitute a Peptidase S1 domain. The cysteines at positions 29 and 45 are disulfide-linked. Catalysis depends on charge relay system residues His-44 and Asp-93. 3 disulfide bridges follow: Cys-127-Cys-197, Cys-158-Cys-176, and Cys-187-Cys-219. Ser-191 functions as the Charge relay system in the catalytic mechanism.

It belongs to the peptidase S1 family.

The chain is Fibrinolytic enzyme, isozyme C from Lumbricus rubellus (Humus earthworm).